A 39-amino-acid polypeptide reads, in one-letter code: Photosystem II reaction center protein L (39 aa).

A helical membrane pass occupies residues 18–38 (SLYWGLLLIFVLAVLFSNYFF).

It belongs to the PsbL family. PSII is composed of 1 copy each of membrane proteins PsbA, PsbB, PsbC, PsbD, PsbE, PsbF, PsbH, PsbI, PsbJ, PsbK, PsbL, PsbM, PsbT, PsbX, PsbY, PsbZ, Psb30/Ycf12, at least 3 peripheral proteins of the oxygen-evolving complex and a large number of cofactors. It forms dimeric complexes.

Its subcellular location is the plastid thylakoid membrane. Its function is as follows. One of the components of the core complex of photosystem II (PSII). PSII is a light-driven water:plastoquinone oxidoreductase that uses light energy to abstract electrons from H(2)O, generating O(2) and a proton gradient subsequently used for ATP formation. It consists of a core antenna complex that captures photons, and an electron transfer chain that converts photonic excitation into a charge separation. This subunit is found at the monomer-monomer interface and is required for correct PSII assembly and/or dimerization. The sequence is that of Photosystem II reaction center protein L from Cuscuta gronovii (Common dodder).